The following is a 552-amino-acid chain: Non-structural protein NS1 (552 aa).

The protein belongs to the orbivirus non-structural protein NS1 family.

This is Non-structural protein NS1 (Segment-5) from Bluetongue virus 13 (isolate USA) (BTV 13).